The chain runs to 337 residues: MEDERITSAEVQSPDEENEELSLRPQTLHQYIGQDQIKHELEVYIAAAKNREEALDHVLLYGPPGLGKTTLAMVIANEMNVQIRTTSGPAIEKPGDLVALLNELQPGDVLFIDEIHRLPKVVEEMLYSAMEDFFVDIVVGQGPTAHPIHFPLPPFTLIGATTRAGLLSAPLRDRFGIVEHMNYYNEADLANIVRRSAGIFNSHIDDQGAYEIASRSRGTPRISNRLLKRIRDFAEVENDGQIDRQLVSQSLKLLQVDNRGLDRTDKKVLTTMIELYGGGPVGISTIAANIGEEPDTISEMYEPYLLQIGFLKRTPRGRMVTERAYEHLGLIDQYMNK.

The disordered stretch occupies residues 1–22 (MEDERITSAEVQSPDEENEELS). Residues 1–184 (MEDERITSAE…FGIVEHMNYY (184 aa)) are large ATPase domain (RuvB-L). ATP is bound by residues Leu-23, Arg-24, Gly-65, Lys-68, Thr-69, Thr-70, 131–133 (EDF), Arg-174, Tyr-184, and Arg-221. Thr-69 lines the Mg(2+) pocket. The tract at residues 185-255 (NEADLANIVR…LVSQSLKLLQ (71 aa)) is small ATPAse domain (RuvB-S). The interval 258–337 (NRGLDRTDKK…LGLIDQYMNK (80 aa)) is head domain (RuvB-H). Positions 313 and 318 each coordinate DNA.

It belongs to the RuvB family. In terms of assembly, homohexamer. Forms an RuvA(8)-RuvB(12)-Holliday junction (HJ) complex. HJ DNA is sandwiched between 2 RuvA tetramers; dsDNA enters through RuvA and exits via RuvB. An RuvB hexamer assembles on each DNA strand where it exits the tetramer. Each RuvB hexamer is contacted by two RuvA subunits (via domain III) on 2 adjacent RuvB subunits; this complex drives branch migration. In the full resolvosome a probable DNA-RuvA(4)-RuvB(12)-RuvC(2) complex forms which resolves the HJ.

Its subcellular location is the cytoplasm. The catalysed reaction is ATP + H2O = ADP + phosphate + H(+). In terms of biological role, the RuvA-RuvB-RuvC complex processes Holliday junction (HJ) DNA during genetic recombination and DNA repair, while the RuvA-RuvB complex plays an important role in the rescue of blocked DNA replication forks via replication fork reversal (RFR). RuvA specifically binds to HJ cruciform DNA, conferring on it an open structure. The RuvB hexamer acts as an ATP-dependent pump, pulling dsDNA into and through the RuvAB complex. RuvB forms 2 homohexamers on either side of HJ DNA bound by 1 or 2 RuvA tetramers; 4 subunits per hexamer contact DNA at a time. Coordinated motions by a converter formed by DNA-disengaged RuvB subunits stimulates ATP hydrolysis and nucleotide exchange. Immobilization of the converter enables RuvB to convert the ATP-contained energy into a lever motion, pulling 2 nucleotides of DNA out of the RuvA tetramer per ATP hydrolyzed, thus driving DNA branch migration. The RuvB motors rotate together with the DNA substrate, which together with the progressing nucleotide cycle form the mechanistic basis for DNA recombination by continuous HJ branch migration. Branch migration allows RuvC to scan DNA until it finds its consensus sequence, where it cleaves and resolves cruciform DNA. This chain is Holliday junction branch migration complex subunit RuvB, found in Pediococcus pentosaceus (strain ATCC 25745 / CCUG 21536 / LMG 10740 / 183-1w).